A 133-amino-acid chain; its full sequence is Small ribosomal subunit protein uS8 (133 aa).

The protein belongs to the universal ribosomal protein uS8 family. Part of the 30S ribosomal subunit. Contacts proteins S5 and S12.

Its function is as follows. One of the primary rRNA binding proteins, it binds directly to 16S rRNA central domain where it helps coordinate assembly of the platform of the 30S subunit. The polypeptide is Small ribosomal subunit protein uS8 (Anaplasma phagocytophilum (strain HZ)).